Here is a 341-residue protein sequence, read N- to C-terminus: GTPase Obg (341 aa).

An Obg domain is found at 1–159 (MKFLDQAKVY…RAIWLRLKLI (159 aa)). In terms of domain architecture, OBG-type G spans 160–327 (ADAGLVGLPN…VLRAGAHIIE (168 aa)). GTP contacts are provided by residues 166 to 173 (GLPNAGKS), 191 to 195 (FTTLH), 212 to 215 (DIPG), 279 to 282 (SQID), and 308 to 310 (SAV). Serine 173 and threonine 193 together coordinate Mg(2+).

The protein belongs to the TRAFAC class OBG-HflX-like GTPase superfamily. OBG GTPase family. In terms of assembly, monomer. It depends on Mg(2+) as a cofactor.

The protein localises to the cytoplasm. Functionally, an essential GTPase which binds GTP, GDP and possibly (p)ppGpp with moderate affinity, with high nucleotide exchange rates and a fairly low GTP hydrolysis rate. Plays a role in control of the cell cycle, stress response, ribosome biogenesis and in those bacteria that undergo differentiation, in morphogenesis control. The sequence is that of GTPase Obg from Bartonella tribocorum (strain CIP 105476 / IBS 506).